The following is a 2618-amino-acid chain: Mediator of RNA polymerase II transcription subunit 13 (2618 aa).

Low complexity-rich tracts occupy residues F232 to P255, T509 to A519, and D532 to Q543. 10 disordered regions span residues F232–P279, T509–Q543, G569–P731, L916–L957, T970–C995, T1036–C1055, P1268–V1384, A1521–Y1557, S1614–I1633, and K1985–K2060. Residues T571 and T575 each carry the phosphothreonine modification. 3 stretches are compositionally biased toward polar residues: residues S581 to G590, A634 to Q643, and S669 to S681. The span at A692–P706 shows a compositional bias: gly residues. Residues A711 to A723 are compositionally biased toward low complexity. A compositionally biased stretch (gly residues) spans N939–G949. The segment covering L1272–C1295 has biased composition (polar residues). Gly residues-rich tracts occupy residues G1375–V1384 and A1528–G1538. The span at G1539–H1553 shows a compositional bias: low complexity. Over residues S1614–A1629 the composition is skewed to polar residues. Positions G1993–G2014 are enriched in low complexity. Phosphoserine is present on residues S2472 and S2475.

Belongs to the Mediator complex subunit 13 family. In terms of assembly, component of the Cdk8 module of the Mediator complex, composed of CycC, Cdk8, kto and skd.

It localises to the nucleus. Component of the Mediator complex, a coactivator involved in the regulated transcription of nearly all RNA polymerase II-dependent genes. Mediator functions as a bridge to convey information from gene-specific regulatory proteins to the basal RNA polymerase II transcription machinery. Mediator is recruited to promoters by direct interactions with regulatory proteins and serves as a scaffold for the assembly of a functional preinitiation complex with RNA polymerase II and the general transcription factors. Required for leg and eye development and macrochaete specification or differentiation. Negatively regulates sex comb development. Required for activated transcription of the MtnB and MtnD genes. The sequence is that of Mediator of RNA polymerase II transcription subunit 13 (skd) from Drosophila melanogaster (Fruit fly).